The primary structure comprises 466 residues: 55 kDa erythrocyte membrane protein (466 aa).

Thr2 is modified (N-acetylthreonine). Ser13 and Ser19 each carry phosphoserine. A Phosphothreonine modification is found at Thr49. Residues Ser52, Ser57, and Ser110 each carry the phosphoserine modification. The PDZ domain occupies 71–152 (LIQIEKVTEE…MISLKVIPNQ (82 aa)). Residues 158-228 (ALQMFMRAQF…PSPELQEWRV (71 aa)) form the SH3 domain. Residue Ser243 is modified to Phosphoserine. Residues 268–466 (VVSYEEVVRL…PQWVPVSWVY (199 aa)) form an interaction with PALS1 region. Positions 282 to 451 (RKTLVLIGAS…TLKKLQEAFD (170 aa)) constitute a Guanylate kinase-like domain.

The protein belongs to the MAGUK family. Heterodimer with PALS1. Interacts with DLG5 and NF2. Interacts (via guanylate kinase-like domain) with WHRN (via third PDZ domain). In terms of processing, palmitoylated.

The protein localises to the cell membrane. It is found in the cell projection. Its subcellular location is the stereocilium. Functionally, essential regulator of neutrophil polarity. Regulates neutrophil polarization by regulating AKT1 phosphorylation through a mechanism that is independent of PIK3CG activity. The polypeptide is 55 kDa erythrocyte membrane protein (MPP1) (Papio anubis (Olive baboon)).